A 317-amino-acid chain; its full sequence is Ribosomal protein L11 methyltransferase (317 aa).

Residues threonine 162, glycine 183, aspartate 205, and asparagine 248 each coordinate S-adenosyl-L-methionine.

The protein belongs to the methyltransferase superfamily. PrmA family.

It is found in the cytoplasm. The catalysed reaction is L-lysyl-[protein] + 3 S-adenosyl-L-methionine = N(6),N(6),N(6)-trimethyl-L-lysyl-[protein] + 3 S-adenosyl-L-homocysteine + 3 H(+). In terms of biological role, methylates ribosomal protein L11. The protein is Ribosomal protein L11 methyltransferase of Alkaliphilus metalliredigens (strain QYMF).